Consider the following 331-residue polypeptide: NADH-quinone oxidoreductase subunit H (331 aa).

The next 8 helical transmembrane spans lie at 7 to 27 (ALVT…AVVI), 81 to 101 (MIFT…FAIV), 114 to 134 (IGIL…LFAG), 154 to 174 (ISYE…VGSF), 187 to 207 (VWFI…GVAV), 238 to 258 (FFVG…TLFF), 271 to 291 (WLSF…FILI), and 310 to 330 (VCLP…LAAA).

The protein belongs to the complex I subunit 1 family. As to quaternary structure, NDH-1 is composed of 13 different subunits. Subunits NuoA, H, J, K, L, M, N constitute the membrane sector of the complex.

It is found in the cell inner membrane. It carries out the reaction a quinone + NADH + 5 H(+)(in) = a quinol + NAD(+) + 4 H(+)(out). Functionally, NDH-1 shuttles electrons from NADH, via FMN and iron-sulfur (Fe-S) centers, to quinones in the respiratory chain. The immediate electron acceptor for the enzyme in this species is believed to be ubiquinone. Couples the redox reaction to proton translocation (for every two electrons transferred, four hydrogen ions are translocated across the cytoplasmic membrane), and thus conserves the redox energy in a proton gradient. This subunit may bind ubiquinone. The chain is NADH-quinone oxidoreductase subunit H from Pseudomonas aeruginosa (strain ATCC 15692 / DSM 22644 / CIP 104116 / JCM 14847 / LMG 12228 / 1C / PRS 101 / PAO1).